The primary structure comprises 457 residues: RuvB-like helicase 1 (457 aa).

Residue 72–79 participates in ATP binding; it reads GAPGTGKT.

This sequence belongs to the RuvB family. In terms of assembly, may form heterododecamers with RVB2. Component of the SWR1 chromatin remodeling complex, the INO80 chromatin remodeling complex, and of the R2TP complex.

The protein resides in the nucleus. The catalysed reaction is ATP + H2O = ADP + phosphate + H(+). DNA helicase which participates in several chromatin remodeling complexes, including the SWR1 and the INO80 complexes. The SWR1 complex mediates the ATP-dependent exchange of histone H2A for the H2A variant HZT1 leading to transcriptional regulation of selected genes by chromatin remodeling. The INO80 complex remodels chromatin by shifting nucleosomes and is involved in DNA repair. Also involved in pre-rRNA processing. The sequence is that of RuvB-like helicase 1 (RBV1) from Debaryomyces hansenii (strain ATCC 36239 / CBS 767 / BCRC 21394 / JCM 1990 / NBRC 0083 / IGC 2968) (Yeast).